The following is an 85-amino-acid chain: U4-theraphotoxin-Hhn1a (85 aa).

Residues Met1–Ala22 form the signal peptide. The propeptide occupies Glu23 to Arg48. 3 cysteine pairs are disulfide-bonded: Cys52-Cys66, Cys56-Cys77, and Cys71-Cys82.

It belongs to the neurotoxin 12 (Hwtx-2) family. 02 (Hwtx-2) subfamily. As to quaternary structure, monomer. In terms of tissue distribution, expressed by the venom gland.

The protein resides in the secreted. Neurotoxin active on both insects and mammals. The protein is U4-theraphotoxin-Hhn1a of Cyriopagopus hainanus (Chinese bird spider).